Reading from the N-terminus, the 679-residue chain is ATP-dependent zinc metalloprotease FtsH (679 aa).

The Cytoplasmic portion of the chain corresponds to 1-6; that stretch reads MNRIFR. The helical transmembrane segment at 7-27 threads the bilayer; the sequence is NTIFYLLIFLVIVGIVSVFNS. The Extracellular segment spans residues 28–114; it reads DQTETENVSF…IEPADETSGW (87 aa). Residues 115–135 form a helical membrane-spanning segment; sequence VQFFTGIIPFIIIFILFFFLL. At 136–679 the chain is on the cytoplasmic side; sequence SQAQGGGSRV…SFEDDTNKKE (544 aa). 206-213 lines the ATP pocket; the sequence is GPPGTGKT. Zn(2+) is bound at residue His-428. Residue Glu-429 is part of the active site. His-432 and Asp-504 together coordinate Zn(2+). Basic and acidic residues-rich tracts occupy residues 621 to 642 and 658 to 679; these read LEKE…KEET and PIEK…NKKE. A disordered region spans residues 621–679; it reads LEKEKASESDVKVNINSKKEETPQVEAEQPQEPNTDEPIEKDPSVEDNRSFEDDTNKKE.

In the central section; belongs to the AAA ATPase family. It in the C-terminal section; belongs to the peptidase M41 family. Homohexamer. It depends on Zn(2+) as a cofactor.

The protein resides in the cell membrane. Acts as a processive, ATP-dependent zinc metallopeptidase for both cytoplasmic and membrane proteins. Plays a role in the quality control of integral membrane proteins. The polypeptide is ATP-dependent zinc metalloprotease FtsH (Alkalihalophilus pseudofirmus (strain ATCC BAA-2126 / JCM 17055 / OF4) (Bacillus pseudofirmus)).